We begin with the raw amino-acid sequence, 195 residues long: ALK and LTK ligand 2b (195 aa).

2 disulfides stabilise this stretch: C156-C192 and C170-C179.

Belongs to the ALKAL family. As to quaternary structure, homodimer. As to expression, highly expressed in the swim bladder and single cells of unknown identity in the head.

Its subcellular location is the secreted. The protein localises to the cell membrane. In terms of biological role, cytokine that acts as a physiological ligand for receptor tyrosine kinases LTK and ALK. Required for neural crest cell differentiation and iridophore development during embryonic iridophore development and adult stripe development by acting as a receptor for LTK. Also required for iridophore formation in the adult eye. In Danio rerio (Zebrafish), this protein is ALK and LTK ligand 2b.